Consider the following 348-residue polypeptide: Rhodopsin (348 aa).

M1 bears the N-acetylmethionine mark. The Extracellular portion of the chain corresponds to 1 to 36 (MNGTEGLNFYVPFSNKTGVVRSPFEYPQYYLAEPWQ). Residues N2 and N15 are each glycosylated (N-linked (GlcNAc...) asparagine). A helical transmembrane segment spans residues 37–61 (FSVLAAYMFLLIVLGFPINFLTLYV). Over 62–73 (TVQHKKLRTPLN) the chain is Cytoplasmic. Residues 74–96 (YIPLNLAVANLFMVFGGFTTTLY) form a helical membrane-spanning segment. Topologically, residues 97-110 (TSLHAYFVFGPTGC) are extracellular. A disulfide bond links C110 and C187. A helical membrane pass occupies residues 111–133 (NLEGFFATLGGEIALWSLVVLAI). The 'Ionic lock' involved in activated form stabilization signature appears at 134 to 136 (ERY). The Cytoplasmic portion of the chain corresponds to 134–152 (ERYVVVCKPMSNFRFGENH). Residues 153–173 (AIMGLALTWVMAMACAAPPLV) form a helical membrane-spanning segment. At 174 to 202 (GWSRYIPEGMQCSCGIDYYTSRQEVNNES) the chain is on the extracellular side. E201 is a Zn(2+) binding site. Residues 203-224 (FVIYMFVVHFTIPLVIIFFCYG) form a helical membrane-spanning segment. Topologically, residues 225 to 252 (QLVFTVKEAAAQQQESATTQKAEKEVTR) are cytoplasmic. Residues 253-274 (MVIIMVVAFLICWVPYASVAFY) form a helical membrane-spanning segment. Topologically, residues 275–286 (IFTHQGSDFGPI) are extracellular. A Zn(2+)-binding site is contributed by Q279. Residues 287–308 (FMTIPSFFAKSSSIYNPVIYIM) traverse the membrane as a helical segment. N6-(retinylidene)lysine is present on K296. Topologically, residues 309–348 (MNKQLRNCMLTTLCCGRNPLGDDEASTTASKTETSQVAPA) are cytoplasmic. S-palmitoyl cysteine attachment occurs at residues C322 and C323. The segment at 330-348 (DDEASTTASKTETSQVAPA) is interaction with SAG. S334 is modified (phosphoserine). 2 positions are modified to phosphothreonine: T335 and T336. The residue at position 338 (S338) is a Phosphoserine. Residues T340 and T342 each carry the phosphothreonine modification. S343 bears the Phosphoserine mark.

The protein belongs to the G-protein coupled receptor 1 family. Opsin subfamily. As to quaternary structure, homodimer. May form a complex composed of RHO, GRK1 and RCVRN in a Ca(2+)-dependent manner; RCVRN prevents the interaction between GRK1 and RHO. Interacts with GRK1. Interacts (phosphorylated form) with SAG. Interacts with GNAT1. Interacts with GNAT3. SAG and G-proteins compete for a common binding site. Interacts with PRCD; the interaction promotes PRCD stability. Forms a complex with ASAP1 and ARF4. Forms a complex with ASAP1, RAB11A, Rabin8/RAB3IP, ARF4 and RAB11FIP3; the complex regulates Golgi-to-cilia rhodopsin/RHO transport in photoreceptors. Post-translationally, phosphorylated on some or all of the serine and threonine residues present in the C-terminal region. Contains one covalently linked retinal chromophore. Upon light absorption, the covalently bound 11-cis-retinal is converted to all-trans-retinal. After hydrolysis of the Schiff base and release of the covalently bound all-trans-retinal, active rhodopsin is regenerated by binding of a fresh molecule of 11-cis-retinal.

Its subcellular location is the membrane. It localises to the cell projection. The protein localises to the cilium. The protein resides in the photoreceptor outer segment. Photoreceptor required for image-forming vision at low light intensity. Required for photoreceptor cell viability after birth. Light-induced isomerization of 11-cis to all-trans retinal triggers a conformational change that activates signaling via G-proteins. Subsequent receptor phosphorylation mediates displacement of the bound G-protein alpha subunit by the arrestin SAG and terminates signaling. This Globicephala melas (Long-finned pilot whale) protein is Rhodopsin (RHO).